We begin with the raw amino-acid sequence, 698 residues long: 4-hydroxybutyrate--CoA ligase [ADP-forming] (698 aa).

Residues 491 to 544 (QEVLKAYGLPLPKSTLAKNEAEAVKAAKKIGYPVVMKIASPQIIHKSDAGGVKV) enclose the ATP-grasp domain. 517–544 (AKKIGYPVVMKIASPQIIHKSDAGGVKV) is a binding site for ATP.

It in the N-terminal section; belongs to the acetate CoA ligase alpha subunit family. The protein in the C-terminal section; belongs to the acetate CoA ligase beta subunit family. It depends on Mg(2+) as a cofactor. Mn(2+) serves as cofactor.

It catalyses the reaction 4-hydroxybutanoate + ATP + CoA = 4-hydroxybutanoyl-CoA + ADP + phosphate. In terms of biological role, involved in thaumarchaeal hydroxypropionate/hydroxybutyrate (HP/HB) cycle, a modified version of the autotrophic HP/HB cycle of Crenarchaeota. Catalyzes the formation of 4-hydroxybutyryl-CoA, ADP and phosphate from 4-hydroxybutyrate, coenzyme A (CoA) and ATP. Can also use acetate, propionate and butyrate, with poor catalytic efficiency. The polypeptide is 4-hydroxybutyrate--CoA ligase [ADP-forming] (Nitrosopumilus maritimus (strain SCM1)).